We begin with the raw amino-acid sequence, 369 residues long: Chaperone protein DnaJ (369 aa).

A J domain is found at 4–69 (SYYEILEVEK…KKRALYDRYG (66 aa)). Residues 130–207 (GCKKTIKVQY…CKGKTYILKD (78 aa)) form a CR-type zinc finger. The Zn(2+) site is built by cysteine 143, cysteine 146, cysteine 159, cysteine 162, cysteine 181, cysteine 184, cysteine 195, and cysteine 198. CXXCXGXG motif repeat units lie at residues 143 to 150 (CESCDGTG), 159 to 166 (CKQCNGQG), 181 to 188 (CGACQGKG), and 195 to 202 (CQACKGKT).

Belongs to the DnaJ family. In terms of assembly, homodimer. Requires Zn(2+) as cofactor.

The protein resides in the cytoplasm. Functionally, participates actively in the response to hyperosmotic and heat shock by preventing the aggregation of stress-denatured proteins and by disaggregating proteins, also in an autonomous, DnaK-independent fashion. Unfolded proteins bind initially to DnaJ; upon interaction with the DnaJ-bound protein, DnaK hydrolyzes its bound ATP, resulting in the formation of a stable complex. GrpE releases ADP from DnaK; ATP binding to DnaK triggers the release of the substrate protein, thus completing the reaction cycle. Several rounds of ATP-dependent interactions between DnaJ, DnaK and GrpE are required for fully efficient folding. Also involved, together with DnaK and GrpE, in the DNA replication of plasmids through activation of initiation proteins. The protein is Chaperone protein DnaJ of Helicobacter pylori (strain ATCC 700392 / 26695) (Campylobacter pylori).